A 316-amino-acid polypeptide reads, in one-letter code: Ribose-phosphate pyrophosphokinase (316 aa).

ATP is bound by residues 37-39 and 96-97; these read DGE and RQ. Mg(2+)-binding residues include His131 and Asp171. Lys195 is an active-site residue. D-ribose 5-phosphate-binding positions include Arg197, Asp221, and 225–229; that span reads DTGGT.

It belongs to the ribose-phosphate pyrophosphokinase family. Class I subfamily. In terms of assembly, homohexamer. It depends on Mg(2+) as a cofactor.

The protein localises to the cytoplasm. It carries out the reaction D-ribose 5-phosphate + ATP = 5-phospho-alpha-D-ribose 1-diphosphate + AMP + H(+). Its pathway is metabolic intermediate biosynthesis; 5-phospho-alpha-D-ribose 1-diphosphate biosynthesis; 5-phospho-alpha-D-ribose 1-diphosphate from D-ribose 5-phosphate (route I): step 1/1. In terms of biological role, involved in the biosynthesis of the central metabolite phospho-alpha-D-ribosyl-1-pyrophosphate (PRPP) via the transfer of pyrophosphoryl group from ATP to 1-hydroxyl of ribose-5-phosphate (Rib-5-P). In Haemophilus ducreyi (strain 35000HP / ATCC 700724), this protein is Ribose-phosphate pyrophosphokinase.